The sequence spans 415 residues: Glutamyl-tRNA reductase (415 aa).

Residues 49-52 (TCNR), serine 104, 109-111 (EPQ), and glutamine 115 contribute to the substrate site. Residue cysteine 50 is the Nucleophile of the active site. 184-189 (GAGEMI) provides a ligand contact to NADP(+).

This sequence belongs to the glutamyl-tRNA reductase family. Homodimer.

It carries out the reaction (S)-4-amino-5-oxopentanoate + tRNA(Glu) + NADP(+) = L-glutamyl-tRNA(Glu) + NADPH + H(+). It participates in porphyrin-containing compound metabolism; protoporphyrin-IX biosynthesis; 5-aminolevulinate from L-glutamyl-tRNA(Glu): step 1/2. In terms of biological role, catalyzes the NADPH-dependent reduction of glutamyl-tRNA(Glu) to glutamate 1-semialdehyde (GSA). This chain is Glutamyl-tRNA reductase, found in Neisseria meningitidis serogroup B (strain ATCC BAA-335 / MC58).